A 558-amino-acid chain; its full sequence is 2-hydroxy-7-methoxy-5-methyl-1-naphthoate--CoA ligase (558 aa).

ATP-binding positions include Gly-212–Gly-213, Ala-329–Arg-331, Val-351, Asp-435, Arg-450, and Lys-542.

This sequence belongs to the ATP-dependent AMP-binding enzyme family.

It catalyses the reaction 2-hydroxy-7-methoxy-5-methyl-1-naphthoate + ATP + CoA = 2-hydroxy-7-methoxy-5-methyl-1-naphthoyl-CoA + AMP + diphosphate. It participates in antibiotic biosynthesis. Its function is as follows. Catalyzes the activation of 2-hydroxy-7-methoxy-5-methyl-1-naphthoate in the biosynthesis of the naphthoate moiety of the neocarzinostatin chromophore. Also catalyzes the activation of other 1-naphthoic acid analogs such as 2-hydroxy-5-methyl-1-naphthoate or 2,7-dihydroxy-5-methyl-1-naphthoate in vitro. This Streptomyces carzinostaticus protein is 2-hydroxy-7-methoxy-5-methyl-1-naphthoate--CoA ligase.